A 388-amino-acid polypeptide reads, in one-letter code: MIKNPKVLILTAHYGNGHVQVAKTLEQTFRQKGIKDVIVCDLFGESHPVITDITKYLYLKSYTIGKELYRLFYYGVEKIYDKKIASWYANFGRKRLKLLLQAEKPDIVINTFPIIAVPELKKQTGISIPVYNVLTDFCVHKIWIHREVDRYFVATDHVKKVMVDIGVPAEQIVETGIPIRSSFELKINSDIIYNKYQLCKNKKILLIVAGAHGVLGSVKELCQSFMSVPDLQVVVVCGKNEALKQDLLGLQEKNPDALKVFGYVENIDELFRVTSCMITKPGGITLSEAAALQVPVILYKPVPGQENENAMYFERKGAAVVIRDDSEVFAKTEALLQDDMKLLQMKEAMKSIYRPEPADHIVDTILAENHVEPNHIPIKSPALAQSFT.

Belongs to the glycosyltransferase 28 family. UgtP subfamily.

It localises to the cell membrane. It carries out the reaction a 1,2-diacyl-3-O-(beta-D-glucopyranosyl)-sn-glycerol + UDP-alpha-D-glucose = a 1,2-diacyl-3-O-(beta-D-Glc-(1-&gt;6)-beta-D-Glc)-sn-glycerol + UDP + H(+). The catalysed reaction is a 1,2-diacyl-3-O-(beta-D-Glc-(1-&gt;6)-beta-D-Glc)-sn-glycerol + UDP-alpha-D-glucose = a 1,2-diacyl-3-O-(beta-D-Glc-(1-&gt;6)-beta-D-Glc-(1-&gt;6)-beta-D-Glc)-sn-glycerol + UDP + H(+). It catalyses the reaction a 1,2-diacyl-sn-glycerol + UDP-alpha-D-glucose = a 1,2-diacyl-3-O-(beta-D-glucopyranosyl)-sn-glycerol + UDP + H(+). It participates in glycolipid metabolism; diglucosyl-diacylglycerol biosynthesis. Its function is as follows. Processive glucosyltransferase involved in the biosynthesis of both the bilayer- and non-bilayer-forming membrane glucolipids. Is able to successively transfer up to three glucosyl residues to diacylglycerol (DAG), thereby catalyzing the formation of beta-monoglucosyl-DAG (3-O-(beta-D-glucopyranosyl)-1,2-diacyl-sn-glycerol), beta-diglucosyl-DAG (3-O-(beta-D-glucopyranosyl-beta-(1-&gt;6)-D-glucopyranosyl)-1,2-diacyl-sn-glycerol) and beta-triglucosyl-DAG (3-O-(beta-D-glucopyranosyl-beta-(1-&gt;6)-D-glucopyranosyl-beta-(1-&gt;6)-D-glucopyranosyl)-1,2-diacyl-sn-glycerol). Beta-diglucosyl-DAG is the predominant glycolipid found in Bacillales and is also used as a membrane anchor for lipoteichoic acid (LTA). The sequence is that of Processive diacylglycerol beta-glucosyltransferase from Bacillus cereus (strain ATCC 10987 / NRS 248).